The sequence spans 274 residues: Ribosomal RNA small subunit methyltransferase A (274 aa).

Positions 28, 30, 55, 77, 103, and 122 each coordinate S-adenosyl-L-methionine.

It belongs to the class I-like SAM-binding methyltransferase superfamily. rRNA adenine N(6)-methyltransferase family. RsmA subfamily.

It localises to the cytoplasm. It catalyses the reaction adenosine(1518)/adenosine(1519) in 16S rRNA + 4 S-adenosyl-L-methionine = N(6)-dimethyladenosine(1518)/N(6)-dimethyladenosine(1519) in 16S rRNA + 4 S-adenosyl-L-homocysteine + 4 H(+). In terms of biological role, specifically dimethylates two adjacent adenosines (A1518 and A1519) in the loop of a conserved hairpin near the 3'-end of 16S rRNA in the 30S particle. May play a critical role in biogenesis of 30S subunits. The polypeptide is Ribosomal RNA small subunit methyltransferase A (Sinorhizobium medicae (strain WSM419) (Ensifer medicae)).